Reading from the N-terminus, the 333-residue chain is PDZ domain-containing protein GIPC1 (333 aa).

The span at 1 to 11 (MPLGLGRRKKA) shows a compositional bias: basic residues. The tract at residues 1 to 54 (MPLGLGRRKKAPPLVENEEAEPGRGGLGVGEPGPLGGGGSGGPQMGLPPPPPAL) is disordered. Positions 23–44 (GRGGLGVGEPGPLGGGGSGGPQ) are enriched in gly residues. Residue serine 68 is modified to Phosphoserine. The region spanning 133 to 213 (EVEVFKSEDA…GRTFTLKLTE (81 aa)) is the PDZ domain. 3 positions are modified to phosphoserine: serine 222, serine 225, and serine 232. The interval 223–244 (QRSAGGRPGSGPQLGTGRGTLR) is disordered. Positions 228–240 (GRPGSGPQLGTGR) are enriched in gly residues. Residue threonine 242 is modified to Phosphothreonine. Serine 247 is subject to Phosphoserine.

It belongs to the GIPC family. As to quaternary structure, interacts with GLUT1 (C-terminus), ACTN1, KIF1B, MYO6, PLEKHG5, SDC4/syndecan-4 and SEMA4C/semaphorin-4C. Interacts with RGS19 C-terminus. Interacts with HTLV-I Tax through the PDZ domain. As to expression, widely expressed. Expressed in skeletal muscle (at protein level).

The protein resides in the cytoplasm. The protein localises to the membrane. May be involved in G protein-linked signaling. The chain is PDZ domain-containing protein GIPC1 (GIPC1) from Homo sapiens (Human).